A 1050-amino-acid chain; its full sequence is Collagen alpha-2(I) chain (1050 aa).

A disordered region spans residues 1–1050 (SGGFDFSFLP…FGYEGDFYRA (1050 aa)). 4-hydroxyproline occurs at positions 10 and 13. A compositionally biased stretch (gly residues) spans 20–32 (RYYGVGLGPGPMG). Composition is skewed to low complexity over residues 33–46 (LMGPRGPPGASGAP) and 56–77 (EPGEPGQTGPAGARGPPGAPGK). Residues proline 40 and proline 46 each carry the 4-hydroxyproline modification. Positions 78–92 (AGEDGHPGKPGRPGE) are enriched in basic and acidic residues. Residue lysine 114 is modified to 5-hydroxylysine; alternate. Residue lysine 114 is glycosylated (O-linked (Gal...) hydroxylysine; alternate). Low complexity-rich tracts occupy residues 161 to 190 (VGAPGPAGARGSDGSVGPVGPAGPIGSAGP), 236 to 257 (PGANGLTGAKGAAGLPGVAGAP), 298 to 311 (EPGSAGPQGPPGSS), 320 to 338 (NGESGSTGPTGPPGLRGNP), and 355 to 371 (PAGARGASGPAGVRGPS). A 4-hydroxyproline mark is found at proline 377 and proline 380. Low complexity-rich tracts occupy residues 406–425 (LPGIDGRPGPIGPAGARGEA) and 452–467 (AGNRGAPGPDGNNGAQ). A compositionally biased stretch (gly residues) spans 474 to 483 (GVQGGKGEQG). 3 stretches are compositionally biased toward low complexity: residues 530 to 547 (PGESGAVGPSGAIGSRGP), 598 to 642 (VGTT…PRGS), and 649 to 669 (VGPAGPNGFAGPAGAAGQPGA). Basic and acidic residues predominate over residues 670 to 679 (KGERGTKGPK). Residues 687-697 (PTGPVGSAGPA) show a composition bias toward low complexity. The segment covering 707–716 (GSRGDGGPPG) has biased composition (gly residues). Over residues 718 to 727 (TGFPGAAGRT) the composition is skewed to low complexity. Positions 764-773 (GETGAGGPPG) are enriched in gly residues. 4 stretches are compositionally biased toward low complexity: residues 781-808 (SGEPGTAGPPGTAGPQGLLGAPGILGLP), 816-841 (LPGVAGAVGEPGPLGIAGPPGARGPS), 881-903 (YAGNAGPVGAAGAPGPHGTVGPA), and 911-926 (EPGPVGSVGPVGALGP). The span at 936–947 (RGDKGEPGDKGP) shows a compositional bias: basic and acidic residues. The segment covering 1020–1032 (SGPPGPPGPPGPP) has biased composition (pro residues).

It belongs to the fibrillar collagen family. As to quaternary structure, trimers of one alpha 2(I) and two alpha 1(I) chains. Interacts (via C-terminus) with TMEM131 (via PapD-L domain); the interaction is direct and is involved in assembly and TRAPPIII ER-to-Golgi transport complex-dependent secretion of collagen. In terms of processing, prolines at the third position of the tripeptide repeating unit (G-X-Y) are hydroxylated in some or all of the chains. As to expression, expressed in bones.

The protein resides in the secreted. It localises to the extracellular space. Its subcellular location is the extracellular matrix. Its function is as follows. Type I collagen is a member of group I collagen (fibrillar forming collagen). The protein is Collagen alpha-2(I) chain of Megatherium americanum (Giant ground sloth).